The primary structure comprises 286 residues: ATP synthase gamma chain (286 aa).

It belongs to the ATPase gamma chain family. In terms of assembly, F-type ATPases have 2 components, CF(1) - the catalytic core - and CF(0) - the membrane proton channel. CF(1) has five subunits: alpha(3), beta(3), gamma(1), delta(1), epsilon(1). CF(0) has three main subunits: a, b and c.

Its subcellular location is the cell inner membrane. Its function is as follows. Produces ATP from ADP in the presence of a proton gradient across the membrane. The gamma chain is believed to be important in regulating ATPase activity and the flow of protons through the CF(0) complex. This Shewanella denitrificans (strain OS217 / ATCC BAA-1090 / DSM 15013) protein is ATP synthase gamma chain.